The following is a 372-amino-acid chain: Peroxisomal biogenesis factor 3 (372 aa).

Topologically, residues M1–K15 are cytoplasmic. Residues M1–A45 are targeting to peroxisomes. The chain crosses the membrane as a helical span at residues C16 to K36. Topologically, residues L37–I116 are peroxisomal. A helical membrane pass occupies residues V117–I140. The interval Y120–I136 is interaction with PEX19. Over Y141–K372 the chain is Cytoplasmic.

The protein belongs to the peroxin-3 family. Interacts with PEX19.

It localises to the peroxisome membrane. Functionally, involved in peroxisome biosynthesis and integrity. Assembles membrane vesicles before the matrix proteins are translocated. As a docking factor for PEX19, is necessary for the import of peroxisomal membrane proteins in the peroxisomes. The protein is Peroxisomal biogenesis factor 3 (Pex3) of Rattus norvegicus (Rat).